Here is a 338-residue protein sequence, read N- to C-terminus: 3-isopropylmalate dehydrogenase (338 aa).

4 residues coordinate substrate: arginine 88, arginine 98, arginine 122, and aspartate 212. Residues aspartate 212, aspartate 236, and aspartate 240 each contribute to the Mg(2+) site. NAD(+) is bound at residue 272–284 (GSAPDIAGQGIAD).

Belongs to the isocitrate and isopropylmalate dehydrogenases family. LeuB type 2 subfamily. As to quaternary structure, homodimer. Requires Mg(2+) as cofactor. Mn(2+) is required as a cofactor.

It is found in the cytoplasm. The enzyme catalyses (2R,3S)-3-isopropylmalate + NAD(+) = 4-methyl-2-oxopentanoate + CO2 + NADH. It participates in amino-acid biosynthesis; L-leucine biosynthesis; L-leucine from 3-methyl-2-oxobutanoate: step 3/4. Functionally, catalyzes the oxidation of 3-carboxy-2-hydroxy-4-methylpentanoate (3-isopropylmalate) to 3-carboxy-4-methyl-2-oxopentanoate. The product decarboxylates to 4-methyl-2 oxopentanoate. This is 3-isopropylmalate dehydrogenase from Corynebacterium jeikeium (strain K411).